The chain runs to 398 residues: Acetate kinase (398 aa).

Asn-8 provides a ligand contact to Mg(2+). Lys-15 contacts ATP. Residue Arg-89 coordinates substrate. Residue Asp-146 is the Proton donor/acceptor of the active site. ATP-binding positions include 206-210 (HIGNG), 283-285 (DMR), and 331-335 (GMGEN). Position 383 (Glu-383) interacts with Mg(2+).

This sequence belongs to the acetokinase family. As to quaternary structure, homodimer. Requires Mg(2+) as cofactor. Mn(2+) serves as cofactor.

The protein resides in the cytoplasm. The catalysed reaction is acetate + ATP = acetyl phosphate + ADP. It functions in the pathway metabolic intermediate biosynthesis; acetyl-CoA biosynthesis; acetyl-CoA from acetate: step 1/2. Functionally, catalyzes the formation of acetyl phosphate from acetate and ATP. Can also catalyze the reverse reaction. The sequence is that of Acetate kinase from Streptococcus pyogenes serotype M12 (strain MGAS2096).